The following is a 352-amino-acid chain: MVVSVAILGGSGYTGGELLRLLLSHPEVEVKQVTSRSRAGKFVHTVHPNLRKRTALKFVPPEALEPVDLLFACLPHGETAPIVDRLLELAPIVIDLSADFRLRDPAAYEQWYHWTHPRPDLLAQAVYGLPELHREEIRNARYIACPGCNSTTVILGLAPLFRAGLIDLDLPVTVECKVGSSGAGGEAGPASHHPERSGVIRPFKPGGHRHTAEVLQELTVCGRTPSLGLSVTSVEAVRGILATAHLFPKQPLTDRDLWQVYRAAYGQEPFIRLVKEASGIHRYPEPKILAGSNYCDIGWELDELPGGRQRLVVMSAIDNLMKGAAGQAVQAMNIRLGFPETLGLEFPGLHPL.

11–14 contacts NADP(+); sequence SGYT. Cysteine 148 is an active-site residue. Asparagine 319 contributes to the NADP(+) binding site.

It belongs to the NAGSA dehydrogenase family. Type 1 subfamily. LysY sub-subfamily.

It is found in the cytoplasm. The enzyme catalyses [amino-group carrier protein]-C-terminal-N-(1-carboxy-5-oxopentan-1-yl)-L-glutamine + phosphate + NADP(+) = [amino-group carrier protein]-C-terminal-N-(1-carboxy-5-phosphooxy-5-oxopentan-1-yl)-L-glutamine + NADPH + H(+). It functions in the pathway amino-acid biosynthesis; L-lysine biosynthesis via AAA pathway; L-lysine from L-alpha-aminoadipate (Thermus route): step 3/5. Catalyzes the NADPH-dependent reduction of [LysW]-aminoadipate 6-phosphate to yield [LysW]-aminoadipate 6-semialdehyde. In Thermomicrobium roseum (strain ATCC 27502 / DSM 5159 / P-2), this protein is Putative [LysW]-L-2-aminoadipate 6-phosphate reductase.